The following is a 95-amino-acid chain: Aspartyl/glutamyl-tRNA(Asn/Gln) amidotransferase subunit C (95 aa).

The protein belongs to the GatC family. As to quaternary structure, heterotrimer of A, B and C subunits.

The enzyme catalyses L-glutamyl-tRNA(Gln) + L-glutamine + ATP + H2O = L-glutaminyl-tRNA(Gln) + L-glutamate + ADP + phosphate + H(+). It carries out the reaction L-aspartyl-tRNA(Asn) + L-glutamine + ATP + H2O = L-asparaginyl-tRNA(Asn) + L-glutamate + ADP + phosphate + 2 H(+). Allows the formation of correctly charged Asn-tRNA(Asn) or Gln-tRNA(Gln) through the transamidation of misacylated Asp-tRNA(Asn) or Glu-tRNA(Gln) in organisms which lack either or both of asparaginyl-tRNA or glutaminyl-tRNA synthetases. The reaction takes place in the presence of glutamine and ATP through an activated phospho-Asp-tRNA(Asn) or phospho-Glu-tRNA(Gln). The polypeptide is Aspartyl/glutamyl-tRNA(Asn/Gln) amidotransferase subunit C (Thermoanaerobacter pseudethanolicus (strain ATCC 33223 / 39E) (Clostridium thermohydrosulfuricum)).